Here is a 219-residue protein sequence, read N- to C-terminus: Probable nicotinate-nucleotide adenylyltransferase (219 aa).

It belongs to the NadD family.

It catalyses the reaction nicotinate beta-D-ribonucleotide + ATP + H(+) = deamido-NAD(+) + diphosphate. Its pathway is cofactor biosynthesis; NAD(+) biosynthesis; deamido-NAD(+) from nicotinate D-ribonucleotide: step 1/1. Catalyzes the reversible adenylation of nicotinate mononucleotide (NaMN) to nicotinic acid adenine dinucleotide (NaAD). The polypeptide is Probable nicotinate-nucleotide adenylyltransferase (Erythrobacter litoralis (strain HTCC2594)).